Reading from the N-terminus, the 2936-residue chain is Neurobeachin (2936 aa).

The segment at 961–985 (ENIKKGKKGNVSTISGLSSQTAGAK) is disordered. The span at 970-982 (NVSTISGLSSQTA) shows a compositional bias: polar residues. Ser1001 and Ser1004 each carry phosphoserine. 2 stretches are compositionally biased toward polar residues: residues 1203-1220 (TSDG…SSTK) and 1231-1241 (TLETESSNSKA). Disordered regions lie at residues 1203–1222 (TSDG…TKGL), 1231–1265 (TLET…ESGK), and 1270–1289 (IQTT…QQDR). Positions 1253–1265 (DTERSDDGKESGK) are enriched in basic and acidic residues. Residues 1270–1286 (IQTTATTQAVQGRSSTQ) are compositionally biased toward polar residues. A WD 1 repeat occupies 1316 to 1358 (TTMFRIPEFKWSPMHQRLLTDLLFALETDVHVWRSHSTKSVMD). 4 disordered regions span residues 1480-1521 (QRDR…LSPI), 1639-1667 (PDTV…DSGM), 1701-1721 (VKKS…PAPS), and 1830-1850 (TGAV…VNGA). Residue Ser1519 is modified to Phosphoserine. Positions 1701–1714 (VKKSQESLTEHPSE) are enriched in basic and acidic residues. 2 positions are modified to phosphoserine: Ser1704 and Ser1707. The span at 1835-1845 (SGSSSSSSSSS) shows a compositional bias: low complexity. Ser2128 carries the phosphoserine modification. In terms of domain architecture, BEACH-type PH spans 2137–2245 (NLAGPVVLST…TVKKVVYSLP (109 aa)). Residues 2264–2553 (ATPRQLYKSS…QLLIEPHPPR (290 aa)) form the BEACH domain. A Phosphoserine modification is found at Ser2565. WD repeat units follow at residues 2708-2751 (GHWD…HIIG), 2768-2808 (GHDH…RALE), 2850-2889 (EIND…QLYI), and 2892-2931 (GCDA…WHYE).

The protein belongs to the WD repeat neurobeachin family. Interacts with RII subunit of PKA. As to expression, forebrain, brainstem and cerebellum.

The protein localises to the membrane. It is found in the endomembrane system. Its subcellular location is the postsynaptic cell membrane. In terms of biological role, binds to type II regulatory subunits of protein kinase A and anchors/targets them to the membrane. May anchor the kinase to cytoskeletal and/or organelle-associated proteins. May have a role in membrane trafficking. In Mus musculus (Mouse), this protein is Neurobeachin (Nbea).